Reading from the N-terminus, the 95-residue chain is 6 kDa early secretory antigenic target homolog (95 aa).

This sequence belongs to the WXG100 family. ESAT-6 subfamily. As to quaternary structure, forms a tight 1:1 complex with EsxB.

It is found in the secreted. Functionally, a secreted protein that might play a role in virulence. This chain is 6 kDa early secretory antigenic target homolog (esxA), found in Mycobacterium leprae (strain TN).